The primary structure comprises 212 residues: Imidazole glycerol phosphate synthase subunit HisH (212 aa).

The region spanning 1–211 is the Glutamine amidotransferase type-1 domain; it reads MIGVIDYGMG…TKMAAEQQVK (211 aa). The active-site Nucleophile is Cys-79. Active-site residues include His-186 and Glu-188.

As to quaternary structure, heterodimer of HisH and HisF.

Its subcellular location is the cytoplasm. The enzyme catalyses 5-[(5-phospho-1-deoxy-D-ribulos-1-ylimino)methylamino]-1-(5-phospho-beta-D-ribosyl)imidazole-4-carboxamide + L-glutamine = D-erythro-1-(imidazol-4-yl)glycerol 3-phosphate + 5-amino-1-(5-phospho-beta-D-ribosyl)imidazole-4-carboxamide + L-glutamate + H(+). It carries out the reaction L-glutamine + H2O = L-glutamate + NH4(+). Its pathway is amino-acid biosynthesis; L-histidine biosynthesis; L-histidine from 5-phospho-alpha-D-ribose 1-diphosphate: step 5/9. Its function is as follows. IGPS catalyzes the conversion of PRFAR and glutamine to IGP, AICAR and glutamate. The HisH subunit catalyzes the hydrolysis of glutamine to glutamate and ammonia as part of the synthesis of IGP and AICAR. The resulting ammonia molecule is channeled to the active site of HisF. This Bacillus velezensis (strain DSM 23117 / BGSC 10A6 / LMG 26770 / FZB42) (Bacillus amyloliquefaciens subsp. plantarum) protein is Imidazole glycerol phosphate synthase subunit HisH.